The chain runs to 350 residues: Histidinol-phosphate aminotransferase (350 aa).

An N6-(pyridoxal phosphate)lysine modification is found at lysine 207.

Belongs to the class-II pyridoxal-phosphate-dependent aminotransferase family. Histidinol-phosphate aminotransferase subfamily. As to quaternary structure, homodimer. It depends on pyridoxal 5'-phosphate as a cofactor.

The catalysed reaction is L-histidinol phosphate + 2-oxoglutarate = 3-(imidazol-4-yl)-2-oxopropyl phosphate + L-glutamate. It functions in the pathway amino-acid biosynthesis; L-histidine biosynthesis; L-histidine from 5-phospho-alpha-D-ribose 1-diphosphate: step 7/9. The polypeptide is Histidinol-phosphate aminotransferase (Streptococcus thermophilus (strain ATCC BAA-491 / LMD-9)).